Consider the following 214-residue polypeptide: Pyridoxine/pyridoxamine 5'-phosphate oxidase (214 aa).

Residues 9 to 12 (RKDY) and Lys-67 each bind substrate. FMN-binding positions include 62–67 (RMVLLK), 77–78 (FT), Arg-83, Lys-84, and Gln-106. 3 residues coordinate substrate: Tyr-124, Arg-128, and Ser-132. FMN is bound by residues 141 to 142 (QS) and Trp-186. 192 to 194 (RLH) is a substrate binding site. Residue Arg-196 participates in FMN binding.

This sequence belongs to the pyridoxamine 5'-phosphate oxidase family. In terms of assembly, homodimer. Requires FMN as cofactor.

The catalysed reaction is pyridoxamine 5'-phosphate + O2 + H2O = pyridoxal 5'-phosphate + H2O2 + NH4(+). The enzyme catalyses pyridoxine 5'-phosphate + O2 = pyridoxal 5'-phosphate + H2O2. The protein operates within cofactor metabolism; pyridoxal 5'-phosphate salvage; pyridoxal 5'-phosphate from pyridoxamine 5'-phosphate: step 1/1. It functions in the pathway cofactor metabolism; pyridoxal 5'-phosphate salvage; pyridoxal 5'-phosphate from pyridoxine 5'-phosphate: step 1/1. Functionally, catalyzes the oxidation of either pyridoxine 5'-phosphate (PNP) or pyridoxamine 5'-phosphate (PMP) into pyridoxal 5'-phosphate (PLP). The sequence is that of Pyridoxine/pyridoxamine 5'-phosphate oxidase from Nostoc sp. (strain PCC 7120 / SAG 25.82 / UTEX 2576).